A 427-amino-acid polypeptide reads, in one-letter code: Protein TIFY 6a (427 aa).

Positions 1 to 25 are enriched in basic and acidic residues; that stretch reads MERDFLGAIWRKEEAAGKPEEHSDY. 2 disordered regions span residues 1–32 and 128–154; these read MERDFLGAIWRKEEAAGKPEEHSDYRGGGGGA and YGVAAPHHFPSPSPSPRHPVPFGHANP. Residues 136–146 are compositionally biased toward pro residues; it reads FPSPSPSPRHP. The 36-residue stretch at 196–231 folds into the Tify domain; that stretch reads QNPKVTQMTIFYDGLVNVFDNIPVEKAQELMLLASR. The interval 296–327 is disordered; that stretch reads SFSSSNDSAGPKSGGLPLAVTPLSQASPSQPI. The segment covering 317 to 327 has biased composition (polar residues); it reads PLSQASPSQPI. Positions 343–367 match the Jas motif; the sequence is PQARKASLARFLEKRKERVSSVAPY. The Nuclear localization signal motif lies at 345-352; that stretch reads ARKASLAR. Residues 361 to 427 form a disordered region; the sequence is VSSVAPYPSS…QEPPSTKLQI (67 aa). Polar residues-rich tracts occupy residues 369–402 and 411–427; these read SSKSPLESSDTIGSPSTPSKSSCTDITPSTNNCE and RNISFSSQEPPSTKLQI.

It belongs to the TIFY/JAZ family. Interacts with COI1A. Interacts with COI1A and COI1B in a coronatine-dependent manner. Coronatine is an analog of jasmonoyl isoleucine (JA-Ile). Post-translationally, ubiquitinated. Targeted for degradation by the SCF(COI1) E3 ubiquitin ligase-proteasome pathway during jasmonate signaling.

It localises to the nucleus. Its function is as follows. Repressor of jasmonate responses. This is Protein TIFY 6a from Oryza sativa subsp. japonica (Rice).